Consider the following 358-residue polypeptide: cAMP-dependent protein kinase catalytic subunit PRKX (358 aa).

Position 1 is an N-acetylmethionine (Met-1). Residues 1 to 34 are disordered; sequence MEAPGLAQAAAAESDSRKVAEETPDGAPALCPSP. Residues 49–303 enclose the Protein kinase domain; that stretch reads FDTLATVGTG…ANDVKHHRWF (255 aa). ATP is bound by residues 55–63 and Lys-78; that span reads VGTGTFGRV. Asp-172 acts as the Proton acceptor in catalysis. Thr-203 bears the Phosphothreonine mark. Residues 304–358 form the AGC-kinase C-terminal domain; sequence RSVDWEAVPQRKLKPPIVPKIAGDGDTSNFETYPENDWDTAAPVPQKDLEIFKNF.

The protein belongs to the protein kinase superfamily. AGC Ser/Thr protein kinase family. cAMP subfamily. As to quaternary structure, like other cAMP-dependent protein kinases, the inactive holoenzyme is probably composed of 2 PRKX catalytic subunits and a dimer of regulatory subunits. Interacts (cAMP-dependent) specifically with the regulatory subunits PRKAR1A and PRKAR1B. Compared to other cAMP-dependent serine/threonine protein kinases, does not interact with the 2 other PKA regulatory subunits PRKAR2A and PRKAR2B. Interacts with cAMP-dependent protein kinase inhibitor/PKI proteins; inhibits PRKX. Interacts with GPKOW. Interacts with SMAD6. Interacts with PKD1; involved in differentiation and controlled morphogenesis of the kidney. Interacts with PIN1 (via WW domain). Phosphorylated; autophosphorylates in vitro. Widely expressed (at protein level). Specifically expressed in blood by macrophages and granulocytes according to PubMed:9860982.

The protein resides in the cytoplasm. It is found in the nucleus. It carries out the reaction L-seryl-[protein] + ATP = O-phospho-L-seryl-[protein] + ADP + H(+). The catalysed reaction is L-threonyl-[protein] + ATP = O-phospho-L-threonyl-[protein] + ADP + H(+). With respect to regulation, binding of cAMP to the PRKAR1A or PRKAR1B regulatory subunits induces dissociation of the holoenzyme heterotetramer. The released monomeric PRKX is then active and able to phosphorylate its substrates. Serine/threonine protein kinase regulated by and mediating cAMP signaling in cells. Acts through phosphorylation of downstream targets that may include CREB, SMAD6 and PKD1 and has multiple functions in cellular differentiation and epithelial morphogenesis. Regulates myeloid cell differentiation through SMAD6 phosphorylation. Involved in nephrogenesis by stimulating renal epithelial cell migration and tubulogenesis. Also involved in angiogenesis through stimulation of endothelial cell proliferation, migration and vascular-like structure formation. The polypeptide is cAMP-dependent protein kinase catalytic subunit PRKX (PRKX) (Homo sapiens (Human)).